A 427-amino-acid polypeptide reads, in one-letter code: Peptidase B (427 aa).

The Mn(2+) site is built by Lys195 and Asp200. The active site involves Lys207. Mn(2+)-binding residues include Asp218, Asp277, and Glu279. Arg281 is a catalytic residue.

The protein belongs to the peptidase M17 family. Homohexamer. Requires Mn(2+) as cofactor.

It localises to the cytoplasm. The enzyme catalyses Release of an N-terminal amino acid, Xaa, from a peptide or arylamide. Xaa is preferably Glu or Asp but may be other amino acids, including Leu, Met, His, Cys and Gln.. Functionally, probably plays an important role in intracellular peptide degradation. The polypeptide is Peptidase B (Salmonella dublin (strain CT_02021853)).